Reading from the N-terminus, the 419-residue chain is Gamma-glutamyl phosphate reductase (419 aa).

The protein belongs to the gamma-glutamyl phosphate reductase family.

The protein resides in the cytoplasm. The catalysed reaction is L-glutamate 5-semialdehyde + phosphate + NADP(+) = L-glutamyl 5-phosphate + NADPH + H(+). It functions in the pathway amino-acid biosynthesis; L-proline biosynthesis; L-glutamate 5-semialdehyde from L-glutamate: step 2/2. Its function is as follows. Catalyzes the NADPH-dependent reduction of L-glutamate 5-phosphate into L-glutamate 5-semialdehyde and phosphate. The product spontaneously undergoes cyclization to form 1-pyrroline-5-carboxylate. The sequence is that of Gamma-glutamyl phosphate reductase from Mannheimia succiniciproducens (strain KCTC 0769BP / MBEL55E).